The sequence spans 435 residues: uncharacterized protein (435 aa).

In terms of domain architecture, F-box spans 7–58 (PFPITKLPLVPRCKILKFFDYGDLLDISLCSKRMAQTVRDIHITADLHYLTL).

This is an uncharacterized protein from Caenorhabditis elegans.